The primary structure comprises 2177 residues: Brefeldin A-inhibited guanine nucleotide-exchange protein 3 (2177 aa).

Low complexity predominate over residues 282-295; that stretch reads TSSTSTSLESDSAS. The tract at residues 282 to 301 is disordered; it reads TSSTSTSLESDSASPGVSDH. A Phosphoserine modification is found at S471. The span at 511 to 524 shows a compositional bias: polar residues; it reads TGQTTLEGELGQTT. Disordered stretches follow at residues 511-542, 617-636, and 1031-1076; these read TGQT…PAIP, AAEK…DNCS, and DGAS…LSTA. One can recognise an SEC7 domain in the interval 583-796; sequence RTRSYGSRYS…EELYHQVLDR (214 aa). Over residues 618 to 627 the composition is skewed to basic and acidic residues; sequence AEKDSGRSDV. Phosphoserine is present on residues S632 and S636. The span at 1032–1047 shows a compositional bias: polar residues; it reads GASQPPLTISQPQKAT. S1049 carries the post-translational modification Phosphoserine. A helical membrane pass occupies residues 1492–1512; that stretch reads GPGFGIYAVVHLLLPVMSVWL. 3 disordered regions span residues 1848 to 1877, 1946 to 2004, and 2033 to 2064; these read STDS…GKEK, ESST…RKKE, and KQQH…SPLL. Residues 1960-1974 are compositionally biased toward basic and acidic residues; that stretch reads TPSEDDRSQSREHMG. Position 1991 is a phosphoserine (S1991). Basic and acidic residues-rich tracts occupy residues 1993-2004 and 2043-2052; these read KVEKKDPSRKKE and KEVKVEKKGE. Residues S2079, S2081, S2095, S2101, and S2103 each carry the phosphoserine modification. The interval 2082-2103 is disordered; that stretch reads AGPELLRQDKRPRSGSTGSSLS.

In terms of assembly, interacts with PHB2. As to expression, expressed in breast cancer cell lines. Not expressed in normal tissues such as duct, mammary gland, lung, heart, liver, kidnay, bone marrow.

The protein resides in the cytoplasm. It localises to the cytoplasmic vesicle. Its subcellular location is the secretory vesicle. The protein localises to the secretory vesicle membrane. In terms of biological role, participates in the regulation of systemic glucose homeostasis, where it negatively regulates insulin granule biogenesis in pancreatic islet beta cells. Also regulates glucagon granule production in pancreatic alpha cells. Inhibits nuclear translocation of the transcriptional coregulator PHB2 and may enhance estrogen receptor alpha (ESR1) transcriptional activity in breast cancer cells. In Homo sapiens (Human), this protein is Brefeldin A-inhibited guanine nucleotide-exchange protein 3.